Reading from the N-terminus, the 127-residue chain is Fatty acid-binding protein, liver (127 aa).

Methionine 1 carries the N-acetylmethionine modification. N6-succinyllysine occurs at positions 31 and 36. At serine 39 the chain carries Phosphoserine. Position 46 is an N6-succinyllysine (lysine 46). Phosphoserine is present on serine 56. An N6-succinyllysine mark is found at lysine 57, lysine 78, and lysine 90. The residue at position 100 (serine 100) is a Phosphoserine. A Deamidated asparagine; alternate modification is found at asparagine 105. Positions 105–106 (NG) form a cross-link, isoaspartyl glycine isopeptide (Asn-Gly); alternate. The residue at position 121 (lysine 121) is an N6-succinyllysine.

This sequence belongs to the calycin superfamily. Fatty-acid binding protein (FABP) family. Monomer. Deamidation and transpeptidation at the beta carboxyl of Asn-105 forms an isoaspartyl residue and Edman degradation appears as though blocked. This rearrangement gives rise to an extra negative charge carried by the acid form.

It is found in the cytoplasm. In terms of biological role, plays a role in lipoprotein-mediated cholesterol uptake in hepatocytes. Binds cholesterol. Binds free fatty acids and their coenzyme A derivatives, bilirubin, and some other small molecules in the cytoplasm. May be involved in intracellular lipid transport. The sequence is that of Fatty acid-binding protein, liver (FABP1) from Bos taurus (Bovine).